The sequence spans 469 residues: Protein RUFY3 (469 aa).

Residues Thr-5 and Thr-12 each carry the phosphothreonine modification. A phosphoserine mark is found at Ser-34 and Ser-49. A Phosphothreonine modification is found at Thr-51. The RUN domain maps to 95–227; sequence DSDYAPLQQF…IDANFCMKGE (133 aa). 2 coiled-coil regions span residues 271–362 and 422–463; these read NRHL…VEKE and KSEL…AANK.

Interacts with PAK1. Interacts (via C-terminus) with Ras-related Rab-5 proteins. Interacts (via C-terminus) with Ras-related Rap-2 proteins. Interacts with PIK3CA and PIK3R1. Interacts (via N-terminus) with FSCN1; this interaction induces neuron axon development. Interacts with DBN1. Interacts (via the second coiled coil) with GTP-, but not GDP-bound ARL8A and ARL8B. Interacts with dynactin/DCTN1 and the dynein intermediate chain DYNC1I1/2. Directly interacts with DYNC1LI1. Post-translationally, phosphorylated by PAK1. Isoform 1 is partially phosphorylated. Overexpressed in gastric cancer cells and tissues (at protein level).

Its subcellular location is the cytoplasm. It is found in the endomembrane system. It localises to the cell projection. The protein resides in the invadopodium. The protein localises to the perikaryon. Its subcellular location is the growth cone. It is found in the filopodium. It localises to the lamellipodium. The protein resides in the lysosome. Its function is as follows. ARL8 effector that promotes the coupling of endolysosomes to dynein-dynactin for retrograde transport along microtubules. Acts by binding both GTP-bound ARL8 and dynein-dynactin. In nonneuronal cells, promotes concentration of endolysosomes in the juxtanuclear area. In hippocampal neurons, drives retrograde transport of endolysosomes from the axon to the soma. Plays a role in the generation of neuronal polarity formation and axon growth. Implicated in the formation of a single axon by developing neurons. May inhibit the formation of additional axons by inhibition of PI3K in minor neuronal processes. Plays a role in the formation of F-actin-enriched protrusive structures at the cell periphery. Plays a role in cytoskeletal organization by regulating the subcellular localization of FSCN1 and DBN1 at axonal growth cones. In Homo sapiens (Human), this protein is Protein RUFY3.